We begin with the raw amino-acid sequence, 363 residues long: Peptide chain release factor 1 (363 aa).

Position 237 is an N5-methylglutamine (Q237). Over residues 284 to 296 (EDEKRRSAEESTR) the composition is skewed to basic and acidic residues. A disordered region spans residues 284–306 (EDEKRRSAEESTRRSLVASGDRS).

It belongs to the prokaryotic/mitochondrial release factor family. Post-translationally, methylated by PrmC. Methylation increases the termination efficiency of RF1.

It localises to the cytoplasm. Peptide chain release factor 1 directs the termination of translation in response to the peptide chain termination codons UAG and UAA. The sequence is that of Peptide chain release factor 1 from Shewanella putrefaciens (strain CN-32 / ATCC BAA-453).